A 72-amino-acid polypeptide reads, in one-letter code: MLITWQDLSPETLENLIESFVLREGTDYGEHERTLEQKVADVKRQLQCGEAVLVWSELHETVNIMPRSQFRE.

Belongs to the UPF0270 family.

In Shigella dysenteriae serotype 1 (strain Sd197), this protein is UPF0270 protein YheU.